The sequence spans 150 residues: Anthrone oxygenase gedH (150 aa).

Transmembrane regions (helical) follow at residues 1 to 21 (MANPAVGAMMGLSLVAVPVFL), 41 to 61 (GHKLMPTIAVATCALHGWVAA), 73 to 93 (PVLAAVTTITMVPFTWVCMVS), and 128 to 148 (LFPLAGAIVACQTLLKELVGG).

The protein belongs to the anthrone oxygenase family.

The protein resides in the membrane. It carries out the reaction emodin anthrone + O2 = emodin + H2O + H(+). Its pathway is secondary metabolite biosynthesis. Anthrone oxygenase; part of the gene cluster that mediates the biosynthesis of geodin, an intermediate in the biosynthesis of other natural products. The pathway begins with the synthesis of atrochrysone thioester by the polyketide synthase (PKS) gedC. The atrochrysone carboxyl ACP thioesterase gedB then breaks the thioester bond and releases the atrochrysone carboxylic acid from gedC. The atrochrysone carboxylic acid is then converted to atrochrysone which is further transformed into emodin anthrone. The next step is performed by the emodin anthrone oxygenase gedH that catalyzes the oxidation of emodinanthrone to emodin. Emodin O-methyltransferase encoded probably by gedA then catalyzes methylation of the 8-hydroxy group of emodin to form questin. Ring cleavage of questin by questin oxidase gedK leads to desmethylsulochrin via several intermediates including questin epoxide. Another methylation step probably catalyzed by methyltransferase gedG leads to the formation of sulochrin which is further converted to dihydrogeodin by the sulochrin halogenase gedL. Finally, the dihydrogeodin oxidase gedJ catalyzes the stereospecific phenol oxidative coupling reaction converting dihydrogeodin to geodin. This chain is Anthrone oxygenase gedH, found in Aspergillus terreus (strain NIH 2624 / FGSC A1156).